The following is a 234-amino-acid chain: Orotate phosphoribosyltransferase (234 aa).

Residue Lys-30 coordinates 5-phospho-alpha-D-ribose 1-diphosphate. Position 38–39 (38–39) interacts with orotate; sequence FF. Residues 80-81, Arg-110, Lys-111, Lys-114, His-116, and 136-144 contribute to the 5-phospho-alpha-D-ribose 1-diphosphate site; these read YK and DDVITAGTA. Positions 140 and 168 each coordinate orotate.

It belongs to the purine/pyrimidine phosphoribosyltransferase family. PyrE subfamily. Homodimer.

It carries out the reaction orotidine 5'-phosphate + diphosphate = orotate + 5-phospho-alpha-D-ribose 1-diphosphate. It functions in the pathway pyrimidine metabolism; UMP biosynthesis via de novo pathway; UMP from orotate: step 1/2. In terms of biological role, catalyzes the transfer of a ribosyl phosphate group from 5-phosphoribose 1-diphosphate to orotate, leading to the formation of orotidine monophosphate (OMP). The chain is Orotate phosphoribosyltransferase (URA5) from Metarhizium anisopliae (Entomophthora anisopliae).